A 395-amino-acid chain; its full sequence is MEKTLAVNAGSSSLKWQLYEMPEETVIAKGIFERIGLSGSISTTKFNNEEHFRKQEIVDHRQAVLLLMDELIHFKLIHEFREITGIGHRVVAGGEFFKTSTVISPEVLAEIKNLSTLAPLHNPANVLGIEAFQRLLPDALAVAVFDTAFHSTLPEKAYRYPIPTKYYEDYSIRKYGAHGTSHMYVAQEAEKVLGKPLEDLKLITAHIGNGASITAIEAGKSVDTSMGFTPLAGVMMGTRAGEMDASVIPYMLESDPSLRNAQDVIDILNKDSGVLGVSELSSDMRDLSEAVAKGNPKAILAYEMYVDRLKKFIAQYFGVLNGADALIFTAGVGENDTAVRTDVVNGLSWFGMEIDESKNVRGAFGIISKPESKVKVLVVPTNEELVIARDVEAAK.

Asn8 contacts Mg(2+). Lys15 contacts ATP. A substrate-binding site is contributed by Arg89. Asp146 serves as the catalytic Proton donor/acceptor. Residues 206-210, 283-285, and 331-335 each bind ATP; these read HIGNG, DMR, and GVGEN. Glu383 contributes to the Mg(2+) binding site.

It belongs to the acetokinase family. Homodimer. Mg(2+) is required as a cofactor. It depends on Mn(2+) as a cofactor.

Its subcellular location is the cytoplasm. The catalysed reaction is acetate + ATP = acetyl phosphate + ADP. It participates in metabolic intermediate biosynthesis; acetyl-CoA biosynthesis; acetyl-CoA from acetate: step 1/2. In terms of biological role, catalyzes the formation of acetyl phosphate from acetate and ATP. Can also catalyze the reverse reaction. The protein is Acetate kinase 2 of Lactococcus lactis subsp. lactis (strain IL1403) (Streptococcus lactis).